The sequence spans 270 residues: Tetraspanin-14 (270 aa).

Residues 1–17 are Cytoplasmic-facing; it reads MHYYRYSNAKVSCWYKY. Residues 18–38 traverse the membrane as a helical segment; it reads LLFSYNIIFWLAGVVFLGVGL. Over 39–61 the chain is Extracellular; sequence WAWSEKGVLSDLTKVTRMHGIDP. The chain crosses the membrane as a helical span at residues 62-82; sequence VVLVLMVGVVMFTLGFAGCVG. Residues 83-92 are Cytoplasmic-facing; the sequence is ALRENICLLN. The helical transmembrane segment at 93-113 threads the bilayer; that stretch reads FFCGTIVLIFFLELAVAVLAF. The Extracellular portion of the chain corresponds to 114–232; the sequence is LFQDWVRDRF…QALESWLPRN (119 aa). Residues 114–232 are necessary and sufficient for interaction with ADAM10; the sequence is LFQDWVRDRF…QALESWLPRN (119 aa). Intrachain disulfides connect cysteine 153-cysteine 221, cysteine 154-cysteine 186, cysteine 170-cysteine 180, and cysteine 187-cysteine 200. The N-linked (GlcNAc...) asparagine glycan is linked to asparagine 169. Residues 233-253 traverse the membrane as a helical segment; the sequence is IYIVAGVFIAISLLQIFGIFL. Over 254 to 270 the chain is Cytoplasmic; sequence ARTLISDIEAVKAGHHF.

The protein belongs to the tetraspanin (TM4SF) family. In terms of assembly, interacts with ADAM10; the interaction promotes ADAM10 maturation and cell surface expression.

The protein localises to the cell membrane. Its function is as follows. Part of TspanC8 subgroup, composed of 6 members that interact with the transmembrane metalloprotease ADAM10. This interaction is required for ADAM10 exit from the endoplasmic reticulum and for enzymatic maturation and trafficking to the cell surface as well as substrate specificity. Different TspanC8/ADAM10 complexes have distinct substrates. Negatively regulates ADAM10-mediated cleavage of GP6. Promotes ADAM10-mediated cleavage of CDH5. The protein is Tetraspanin-14 of Homo sapiens (Human).